The sequence spans 528 residues: Ulvan lyase, short isoform (528 aa).

Residues 1 to 29 form the signal peptide; it reads MKINLSMRELVSRLSTTLKTAIALSVLTA. Cys-30 carries the N-palmitoyl cysteine lipid modification. A lipid anchor (S-diacylglycerol cysteine) is attached at Cys-30. Residue 151-152 coordinates substrate; that stretch reads SH. The Proton donor/acceptor role is filled by His-152. Residues Asp-218, Asp-228, and Lys-230 each contribute to the Ca(2+) site. Tyr-309 and Arg-326 together coordinate substrate. Ca(2+)-binding residues include Asn-329, Asp-332, and Phe-334. His-390 contributes to the substrate binding site.

Belongs to the polysaccharide lyase 24 family.

Its subcellular location is the secreted. The protein resides in the cell membrane. Functionally, ulvan lyase involved in ulvan degradation. Ulvan is the main polysaccharide component of the Ulvales (green seaweed) cell wall. It is composed of disaccharide building blocks comprising 3-sulfated rhamnose (Rha3S) linked to D-glucuronic acid (GlcA), L-iduronic acid (IduA), or D-xylose (Xyl). Ulvan lyase catalyzes preferentially the endolytic cleavage of the glycosidic bond between Rha3S and the uronic acid GlcA, but not IduA, producing oligosaccharides that have unsaturated 4-deoxy-L-threo-hex-4-enopyranosiduronic acid (deltaUA) at the non-reducing end. The most abundant end products in the degradation of the ulvan polysaccharide were deltaUA-Rha3S disaccharides and deltaUA-Rha3S-IduA-Rha3S and deltaUA-Rha3S-Xyl-Rha3S tetrasaccharides. The polypeptide is Ulvan lyase, short isoform (Alteromonas sp. (strain LOR)).